A 991-amino-acid chain; its full sequence is UvrABC system protein A (991 aa).

48 to 55 (GLSGSGKS) provides a ligand contact to ATP. 2 ABC transporter domains span residues 345–624 (WAKS…PKSL) and 644–972 (NHRR…KFLE). An ATP-binding site is contributed by 676–683 (GVSGGGKS). The C4-type zinc finger occupies 775–801 (CEACQGDGVIKIEMHFLPDVYVTCDVC).

The protein belongs to the ABC transporter superfamily. UvrA family. Forms a heterotetramer with UvrB during the search for lesions.

Its subcellular location is the cytoplasm. Functionally, the UvrABC repair system catalyzes the recognition and processing of DNA lesions. UvrA is an ATPase and a DNA-binding protein. A damage recognition complex composed of 2 UvrA and 2 UvrB subunits scans DNA for abnormalities. When the presence of a lesion has been verified by UvrB, the UvrA molecules dissociate. The chain is UvrABC system protein A from Bradyrhizobium diazoefficiens (strain JCM 10833 / BCRC 13528 / IAM 13628 / NBRC 14792 / USDA 110).